A 597-amino-acid polypeptide reads, in one-letter code: Elongation factor 4 (597 aa).

Residues 2 to 184 enclose the tr-type G domain; that stretch reads KNIRNFSIIA…TIVAKVPAPE (183 aa). GTP contacts are provided by residues 14–19 and 131–134; these read DHGKST and NKID.

Belongs to the TRAFAC class translation factor GTPase superfamily. Classic translation factor GTPase family. LepA subfamily.

The protein localises to the cell inner membrane. The enzyme catalyses GTP + H2O = GDP + phosphate + H(+). Required for accurate and efficient protein synthesis under certain stress conditions. May act as a fidelity factor of the translation reaction, by catalyzing a one-codon backward translocation of tRNAs on improperly translocated ribosomes. Back-translocation proceeds from a post-translocation (POST) complex to a pre-translocation (PRE) complex, thus giving elongation factor G a second chance to translocate the tRNAs correctly. Binds to ribosomes in a GTP-dependent manner. The polypeptide is Elongation factor 4 (Francisella tularensis subsp. mediasiatica (strain FSC147)).